A 301-amino-acid chain; its full sequence is Protoheme IX farnesyltransferase (301 aa).

The next 9 membrane-spanning stretches (helical) occupy residues 29–49 (VVALMLLTVLVGMCLALPGAV), 51–71 (LQPLVFGMLGIAMMAGSAAAF), 101–121 (AFSFAFSLGVLGFVLLYWWVN), 123–143 (LTAWLTFASLIGYAVVYTAYL), 150–170 (NIVIGGLAGAMPPLLGWTAVT), 177–197 (ALLLVIIIFTWTPPHFWALAI), 223–243 (CILLYTFLLALACLLPVLVGM), 244–264 (SGPVYLVGSSILSCGFIYKAW), and 281–301 (FSIYHLMLLFVVLLVDHYLWG).

The protein belongs to the UbiA prenyltransferase family. Protoheme IX farnesyltransferase subfamily.

It is found in the cell inner membrane. The catalysed reaction is heme b + (2E,6E)-farnesyl diphosphate + H2O = Fe(II)-heme o + diphosphate. It participates in porphyrin-containing compound metabolism; heme O biosynthesis; heme O from protoheme: step 1/1. Its function is as follows. Converts heme B (protoheme IX) to heme O by substitution of the vinyl group on carbon 2 of heme B porphyrin ring with a hydroxyethyl farnesyl side group. The sequence is that of Protoheme IX farnesyltransferase from Shewanella denitrificans (strain OS217 / ATCC BAA-1090 / DSM 15013).